The primary structure comprises 435 residues: Putative FBD-associated F-box protein At5g56820 (435 aa).

Residues 14–60 form the F-box domain; sequence SDRISYLPDDLLLRILSFIHTSDAISTSLLSKRWKFVWKMMPTLDLD. Residues 341-390 enclose the FBD domain; sequence VRKPNSVPECLTFHLETLEWQGYAGRPEDKEIAVYILGNALRLNTATISR.

The polypeptide is Putative FBD-associated F-box protein At5g56820 (Arabidopsis thaliana (Mouse-ear cress)).